The following is a 319-amino-acid chain: MKPTVISADAMFEEFRGSLRWEWLAGLGASERQFDPEVISRAQSAADLVGYLNYIHPYRVQILGAREVAYLTRGSQEDCARRIARIVTLEPPMLVLADGQAAPDELLSICERAQLPLFATRESSAFVIDLLRAYLSKHFAERTSMHGVFMDILGMGVMITGESGLGKSELGLELISRGNGLVADDAVDLFRINQNTIEGRCPDLLLNLLEVRGIGLLDIRAIFGETAVRRKMRLKLIVHLVRRDSFERDYERMPSAPLTQDVLGIPVRKVIIQVVAGRNIAVLVEAAVRNSILQLRGIDTYADFVARHHKAMESGRDGD.

Active-site residues include histidine 146 and lysine 167. Position 161–168 (161–168 (GESGLGKS)) interacts with ATP. Serine 168 serves as a coordination point for Mg(2+). The active-site Proton acceptor; for phosphorylation activity. Proton donor; for dephosphorylation activity is aspartate 185. The tract at residues 209–218 (LEVRGIGLLD) is important for the catalytic mechanism of both phosphorylation and dephosphorylation. Residue glutamate 210 coordinates Mg(2+). Arginine 252 is an active-site residue. The tract at residues 273-278 (QVVAGR) is important for the catalytic mechanism of dephosphorylation.

The protein belongs to the HPrK/P family. In terms of assembly, homohexamer. The cofactor is Mg(2+).

It catalyses the reaction [HPr protein]-L-serine + ATP = [HPr protein]-O-phospho-L-serine + ADP + H(+). It carries out the reaction [HPr protein]-O-phospho-L-serine + phosphate + H(+) = [HPr protein]-L-serine + diphosphate. In terms of biological role, catalyzes the ATP- as well as the pyrophosphate-dependent phosphorylation of a specific serine residue in HPr, a phosphocarrier protein of the phosphoenolpyruvate-dependent sugar phosphotransferase system (PTS). HprK/P also catalyzes the pyrophosphate-producing, inorganic phosphate-dependent dephosphorylation (phosphorolysis) of seryl-phosphorylated HPr (P-Ser-HPr). The sequence is that of HPr kinase/phosphorylase from Variovorax paradoxus (strain S110).